A 334-amino-acid chain; its full sequence is 3-ketodihydrosphingosine reductase (334 aa).

The first 20 residues, 1-20 (MIIYILFSLLAAVIVHLVYK), serve as a signal peptide directing secretion. Residues Gly36, Ser38, Ser39, Gly40, Arg62, Lys66, Asp100, and Ile101 each coordinate NADPH. The GXSXG motif lies at 36-40 (GGSSG). Ser182 functions as the Proton donor in the catalytic mechanism. Tyr196 functions as the Proton acceptor in the catalytic mechanism. Positions 196 and 200 each coordinate NADP(+). Lys200 (lowers pKa of active site Tyr) is an active-site residue.

Belongs to the short-chain dehydrogenases/reductases (SDR) family.

It is found in the endoplasmic reticulum. The catalysed reaction is sphinganine + NADP(+) = 3-oxosphinganine + NADPH + H(+). The protein operates within lipid metabolism; sphingolipid metabolism. In terms of biological role, catalyzes the reduction of 3'-oxosphinganine (3-ketodihydrosphingosine/KDS) to sphinganine (dihydrosphingosine/DHS), the second step of de novo sphingolipid biosynthesis. The polypeptide is 3-ketodihydrosphingosine reductase (ksrA-1) (Dictyostelium discoideum (Social amoeba)).